A 302-amino-acid chain; its full sequence is UDP-3-O-acyl-N-acetylglucosamine deacetylase (302 aa).

Histidine 78, histidine 237, and aspartate 241 together coordinate Zn(2+). Residue histidine 264 is the Proton donor of the active site.

The protein belongs to the LpxC family. It depends on Zn(2+) as a cofactor.

The catalysed reaction is a UDP-3-O-[(3R)-3-hydroxyacyl]-N-acetyl-alpha-D-glucosamine + H2O = a UDP-3-O-[(3R)-3-hydroxyacyl]-alpha-D-glucosamine + acetate. The protein operates within glycolipid biosynthesis; lipid IV(A) biosynthesis; lipid IV(A) from (3R)-3-hydroxytetradecanoyl-[acyl-carrier-protein] and UDP-N-acetyl-alpha-D-glucosamine: step 2/6. Catalyzes the hydrolysis of UDP-3-O-myristoyl-N-acetylglucosamine to form UDP-3-O-myristoylglucosamine and acetate, the committed step in lipid A biosynthesis. This Hahella chejuensis (strain KCTC 2396) protein is UDP-3-O-acyl-N-acetylglucosamine deacetylase.